The chain runs to 199 residues: Protein GrpE (199 aa).

The segment covering 1 to 24 (MSKQNKKDWKKFKDEHKEEHKVEN) has biased composition (basic and acidic residues). Positions 1–47 (MSKQNKKDWKKFKDEHKEEHKVENEILEEEIDEKSQHQEPALGHPSY) are disordered.

This sequence belongs to the GrpE family. As to quaternary structure, homodimer.

It localises to the cytoplasm. Functionally, participates actively in the response to hyperosmotic and heat shock by preventing the aggregation of stress-denatured proteins, in association with DnaK and GrpE. It is the nucleotide exchange factor for DnaK and may function as a thermosensor. Unfolded proteins bind initially to DnaJ; upon interaction with the DnaJ-bound protein, DnaK hydrolyzes its bound ATP, resulting in the formation of a stable complex. GrpE releases ADP from DnaK; ATP binding to DnaK triggers the release of the substrate protein, thus completing the reaction cycle. Several rounds of ATP-dependent interactions between DnaJ, DnaK and GrpE are required for fully efficient folding. This is Protein GrpE from Legionella pneumophila (strain Paris).